Here is a 725-residue protein sequence, read N- to C-terminus: Rab-like protein 6 (725 aa).

N-acetylmethionine is present on Met-1. The small GTPase-like stretch occupies residues Gly-39–Ser-279. GTP is bound by residues Gly-50 to Thr-57, Asp-100 to Lys-104, and Tyr-177 to Asp-179. Disordered stretches follow at residues Gly-281 to Ala-364 and Pro-378 to Leu-725. 2 stretches are compositionally biased toward low complexity: residues Gln-291–Leu-325 and Ala-343–Pro-353. Residues Gly-410–Val-427 are compositionally biased toward basic and acidic residues. A phosphoserine mark is found at Ser-414, Ser-436, Ser-438, Ser-480, Ser-482, Ser-483, and Ser-502. Positions Gln-499–Ser-514 are enriched in polar residues. Basic and acidic residues predominate over residues Asp-537–Val-549. The span at Asp-569–Ser-578 shows a compositional bias: acidic residues. A phosphoserine mark is found at Ser-575 and Ser-594. The residue at position 597 (Thr-597) is a Phosphothreonine. A compositionally biased stretch (basic and acidic residues) spans Met-632–Lys-649. Ser-637, Ser-638, and Ser-644 each carry phosphoserine. An interaction with CDKN2A region spans residues Lys-652–Lys-690. Residues Thr-666–Ser-675 are compositionally biased toward basic residues. The span at Leu-707–Leu-725 shows a compositional bias: gly residues.

The protein belongs to the small GTPase superfamily. Rab family.

Its subcellular location is the nucleus. The protein resides in the cytoplasm. In terms of biological role, may enhance cellular proliferation. May reduce growth inhibitory activity of CDKN2A. This is Rab-like protein 6 (Rabl6) from Mus musculus (Mouse).